The primary structure comprises 424 residues: Tyrosine--tRNA ligase (424 aa).

Residue tyrosine 33 coordinates L-tyrosine. A 'HIGH' region motif is present at residues 38–47 (PSADSLHIGH). L-tyrosine contacts are provided by tyrosine 170 and glutamine 174. Residues 230-234 (KFGKT) carry the 'KMSKS' region motif. Lysine 233 provides a ligand contact to ATP. Residues 357–424 (MSLIDALVRC…RRHYHLIRLV (68 aa)) enclose the S4 RNA-binding domain.

Belongs to the class-I aminoacyl-tRNA synthetase family. TyrS type 1 subfamily. As to quaternary structure, homodimer.

The protein localises to the cytoplasm. The enzyme catalyses tRNA(Tyr) + L-tyrosine + ATP = L-tyrosyl-tRNA(Tyr) + AMP + diphosphate + H(+). Functionally, catalyzes the attachment of tyrosine to tRNA(Tyr) in a two-step reaction: tyrosine is first activated by ATP to form Tyr-AMP and then transferred to the acceptor end of tRNA(Tyr). In Roseiflexus castenholzii (strain DSM 13941 / HLO8), this protein is Tyrosine--tRNA ligase.